We begin with the raw amino-acid sequence, 108 residues long: UPF0145 protein sll118 (108 aa).

It belongs to the UPF0145 family.

The chain is UPF0145 protein sll118 from Synechocystis sp. (strain ATCC 27184 / PCC 6803 / Kazusa).